The sequence spans 379 residues: Alkanesulfonate monooxygenase (379 aa).

The protein belongs to the SsuD family.

It catalyses the reaction an alkanesulfonate + FMNH2 + O2 = an aldehyde + FMN + sulfite + H2O + 2 H(+). In terms of biological role, catalyzes the desulfonation of aliphatic sulfonates. In Pseudomonas syringae pv. tomato (strain ATCC BAA-871 / DC3000), this protein is Alkanesulfonate monooxygenase.